The following is a 251-amino-acid chain: Eukaryotic translation initiation factor 4E-3 (251 aa).

The interval 200 to 251 is disordered; sequence DSSARTSSTVKPRICLPAKDPAPVKEKGPAATTSPSNPGTEATGTSPATPTP. Residues 230–251 show a composition bias toward polar residues; the sequence is ATTSPSNPGTEATGTSPATPTP.

The protein belongs to the eukaryotic initiation factor 4E family. EIF4F is a multi-subunit complex, the composition of which varies with external and internal environmental conditions. It is composed of at least eIF4A, eIF4E and eIF4G. eIF4E is also known to interact with other partners. Interacts with mxt. Component of the pid-1 variant of the PETISCO complex (also called the pid-3, erh-2, tofu-6, and ife-3 small RNA complex) containing at least pid-1, tofu-6, ife-3, pid-3, and erh-2, which is required for the biogenesis of a class of 21 nucleotide PIWI-interacting RNAs (piRNAs) that possess a uracil residue at the 5'-end (also called 21U-RNAs). Component of the tost-1 variant of the PETISCO complex (also called the pid-3, erh-2, tofu-6, and ife-3 small RNA complex) containing at least tost-1, tofu-6, ife-3, pid-3, and erh-2, which plays an essential role in embryogenesis. Within the pid-1 and tost-1 variants of the PETISCO complexes interacts with tofu-6 (via C-terminus). In contrast to the pid-1 variant of the PETISCO complex, the tost-1 variant of the PETISCO complex plays a minor role in the biogenesis of 21U-RNAs. In terms of tissue distribution, highly expressed in the germline (at protein level).

Its subcellular location is the cytoplasmic granule. It is found in the cytoplasm. The protein resides in the perinuclear region. Its function is as follows. Recognizes and binds the 7-methylguanosine-containing mRNA cap during an early step in the initiation of protein synthesis and facilitates ribosome binding by inducing the unwinding of the mRNAs secondary structures. All 5 eIF4E proteins bind monomethyl cap structures. Only ife-1, ife-2 and ife-5 bind trimethyl cap structures which result from trans-splicing. Translation of trimethyl cap structure mRNAs may be regulated by intracellular redox state; disulfide bonds change the width and depth of the cap-binding cavity determining selectivity to mRNA caps. Ife-3 is essential for viability. Component of the pid-1 and tost-1 variants of the PETISCO complexes, which have roles in the biogenesis of a class of 21 nucleotide PIWI-interacting RNAs (piRNAs) that possess a uracil residue at the 5'-end (also called 21U-RNAs) and embryogenesis, respectively. Within the pid-1 variant of the PETISCO complex binds to capped 21U-RNA precursor molecules, possibly playing a role in the processing of the 5' end of the molecules to promote binding of other complex components such as pid-3. However, it is not essential for the biogenesis of 21U-RNAs by itself. Within the tost-1 variant of the PETISCO complex binds to splice leader SL1 RNA fragments to possibly play a role in their processing. In Caenorhabditis elegans, this protein is Eukaryotic translation initiation factor 4E-3.